The chain runs to 609 residues: Aspartate--tRNA(Asp/Asn) ligase (609 aa).

Glutamate 177 contacts L-aspartate. The segment at 201–204 (QLFK) is aspartate. Residue arginine 223 participates in L-aspartate binding. ATP contacts are provided by residues 223-225 (RDE) and glutamine 232. An L-aspartate-binding site is contributed by histidine 461. Glutamate 499 contributes to the ATP binding site. Arginine 506 lines the L-aspartate pocket. 551-554 (GVDR) serves as a coordination point for ATP.

It belongs to the class-II aminoacyl-tRNA synthetase family. Type 1 subfamily. As to quaternary structure, homodimer.

Its subcellular location is the cytoplasm. It catalyses the reaction tRNA(Asx) + L-aspartate + ATP = L-aspartyl-tRNA(Asx) + AMP + diphosphate. Aspartyl-tRNA synthetase with relaxed tRNA specificity since it is able to aspartylate not only its cognate tRNA(Asp) but also tRNA(Asn). Reaction proceeds in two steps: L-aspartate is first activated by ATP to form Asp-AMP and then transferred to the acceptor end of tRNA(Asp/Asn). This Synechococcus sp. (strain CC9605) protein is Aspartate--tRNA(Asp/Asn) ligase.